The primary structure comprises 216 residues: Cytidylate kinase (216 aa).

10–18 serves as a coordination point for ATP; it reads GPAAAGKST.

It belongs to the cytidylate kinase family. Type 1 subfamily.

It is found in the cytoplasm. The enzyme catalyses CMP + ATP = CDP + ADP. The catalysed reaction is dCMP + ATP = dCDP + ADP. The protein is Cytidylate kinase of Macrococcus caseolyticus (strain JCSC5402) (Macrococcoides caseolyticum).